We begin with the raw amino-acid sequence, 161 residues long: uncharacterized protein (161 aa).

Helical transmembrane passes span 22–42 (LFFINVGLAAVAMLVAGVFGH), 43–63 (LTVGMFLGLGLLLGLLNALLV), 89–109 (LAIITILGLIIAYIFRPAGLG), and 110–130 (VVFGLAFFQVLLVATTALPVL). The tract at residues 141–161 (VATYSSNGQTGGSEGRSASDD) is disordered.

This sequence to M.leprae ML1138.

Its subcellular location is the cell membrane. This is an uncharacterized protein from Mycobacterium bovis (strain ATCC BAA-935 / AF2122/97).